A 393-amino-acid chain; its full sequence is CAI-1 autoinducer synthase (393 aa).

An N6-(pyridoxal phosphate)lysine modification is found at Lys240.

It belongs to the class-II pyridoxal-phosphate-dependent aminotransferase family. The cofactor is pyridoxal 5'-phosphate.

Functionally, required for the synthesis of the quorum-sensing autoinducer CAI-1 ((S)-3-hydroxytridecan-4-one) which probably functions as an intragenus signal. This is CAI-1 autoinducer synthase (cqsA) from Vibrio campbellii (strain ATCC BAA-1116).